The primary structure comprises 387 residues: Growth-regulating factor 3 (387 aa).

Residues 53–88 enclose the QLQ domain; sequence PFTAAQYEELEQQALIYKYLVAGVPVPADLLLPIRR. 2 short sequence motifs (bipartite nuclear localization signal) span residues 111–129 and 147–154; these read KKLD…KKWR and RGRNRSRK. One can recognise a WRC domain in the interval 114-158; sequence DPEPGRCRRTDGKKWRCSKEAAPDSKYCERHMHRGRNRSRKPVEA. Residues 145–176 are disordered; sequence MHRGRNRSRKPVEAQLVAPHSQPPATAPAAAV.

This sequence belongs to the GRF family.

The protein resides in the nucleus. Transcription activator that plays a regulatory role in gibberellin-induced stem elongation. This Oryza sativa subsp. japonica (Rice) protein is Growth-regulating factor 3 (GRF3).